Here is a 177-residue protein sequence, read N- to C-terminus: MTKESLEKATFAGGCFWCMVKPFDTQPGIEKVISGYTGGHTVNPTYKEVCSGTTGHTEAIQITFDPAVFPYEKLVEVYWQQTDPTDAAGQFVDRGDSYRPVIFYHNEEQKEIAEKSKAALDASGRFKKPIVTEIAKAETFYPAEEYHQDFYKKEKAHYEGYQVASGRAAFIDANWKG.

Cys-15 is an active-site residue.

The protein belongs to the MsrA Met sulfoxide reductase family.

The enzyme catalyses L-methionyl-[protein] + [thioredoxin]-disulfide + H2O = L-methionyl-(S)-S-oxide-[protein] + [thioredoxin]-dithiol. It catalyses the reaction [thioredoxin]-disulfide + L-methionine + H2O = L-methionine (S)-S-oxide + [thioredoxin]-dithiol. Its function is as follows. Has an important function as a repair enzyme for proteins that have been inactivated by oxidation. Catalyzes the reversible oxidation-reduction of methionine sulfoxide in proteins to methionine. The polypeptide is Peptide methionine sulfoxide reductase MsrA (Listeria monocytogenes serotype 4b (strain CLIP80459)).